A 188-amino-acid chain; its full sequence is ATP synthase subunit delta (188 aa).

This sequence belongs to the ATPase delta chain family. F-type ATPases have 2 components, F(1) - the catalytic core - and F(0) - the membrane proton channel. F(1) has five subunits: alpha(3), beta(3), gamma(1), delta(1), epsilon(1). F(0) has three main subunits: a(1), b(2) and c(10-14). The alpha and beta chains form an alternating ring which encloses part of the gamma chain. F(1) is attached to F(0) by a central stalk formed by the gamma and epsilon chains, while a peripheral stalk is formed by the delta and b chains.

It is found in the cell membrane. F(1)F(0) ATP synthase produces ATP from ADP in the presence of a proton or sodium gradient. F-type ATPases consist of two structural domains, F(1) containing the extramembraneous catalytic core and F(0) containing the membrane proton channel, linked together by a central stalk and a peripheral stalk. During catalysis, ATP synthesis in the catalytic domain of F(1) is coupled via a rotary mechanism of the central stalk subunits to proton translocation. Functionally, this protein is part of the stalk that links CF(0) to CF(1). It either transmits conformational changes from CF(0) to CF(1) or is implicated in proton conduction. The polypeptide is ATP synthase subunit delta (Lawsonia intracellularis (strain PHE/MN1-00)).